Here is a 490-residue protein sequence, read N- to C-terminus: Betaine aldehyde dehydrogenase (490 aa).

K(+) contacts are provided by Ile-27 and Asp-93. 150 to 152 (GAW) contributes to the NAD(+) binding site. Lys-162 acts as the Charge relay system in catalysis. 176-179 (KPSE) contacts NAD(+). A K(+)-binding site is contributed by Val-180. Residue 230–233 (GTTT) participates in NAD(+) binding. Leu-246 is a K(+) binding site. Glu-252 (proton acceptor) is an active-site residue. The NAD(+) site is built by Gly-254, Cys-286, and Glu-387. Cys-286 functions as the Nucleophile in the catalytic mechanism. Cys-286 bears the Cysteine sulfenic acid (-SOH) mark. Residues Lys-457 and Gly-460 each coordinate K(+). The Charge relay system role is filled by Glu-464.

It belongs to the aldehyde dehydrogenase family. Dimer of dimers. K(+) is required as a cofactor.

The enzyme catalyses betaine aldehyde + NAD(+) + H2O = glycine betaine + NADH + 2 H(+). The protein operates within amine and polyamine biosynthesis; betaine biosynthesis via choline pathway; betaine from betaine aldehyde: step 1/1. In terms of biological role, involved in the biosynthesis of the osmoprotectant glycine betaine. Catalyzes the irreversible oxidation of betaine aldehyde to the corresponding acid. The sequence is that of Betaine aldehyde dehydrogenase from Pseudomonas putida (strain W619).